A 277-amino-acid chain; its full sequence is Ribosomal RNA small subunit methyltransferase A (277 aa).

Asn-23, Leu-25, Gly-50, Glu-75, Asp-98, and Asn-121 together coordinate S-adenosyl-L-methionine.

This sequence belongs to the class I-like SAM-binding methyltransferase superfamily. rRNA adenine N(6)-methyltransferase family. RsmA subfamily.

The protein localises to the cytoplasm. It catalyses the reaction adenosine(1518)/adenosine(1519) in 16S rRNA + 4 S-adenosyl-L-methionine = N(6)-dimethyladenosine(1518)/N(6)-dimethyladenosine(1519) in 16S rRNA + 4 S-adenosyl-L-homocysteine + 4 H(+). In terms of biological role, specifically dimethylates two adjacent adenosines (A1518 and A1519) in the loop of a conserved hairpin near the 3'-end of 16S rRNA in the 30S particle. May play a critical role in biogenesis of 30S subunits. This is Ribosomal RNA small subunit methyltransferase A from Paraburkholderia xenovorans (strain LB400).